Here is a 367-residue protein sequence, read N- to C-terminus: Phosphoribosylaminoimidazole-succinocarboxamide synthase (367 aa).

The protein belongs to the SAICAR synthetase family.

It catalyses the reaction 5-amino-1-(5-phospho-D-ribosyl)imidazole-4-carboxylate + L-aspartate + ATP = (2S)-2-[5-amino-1-(5-phospho-beta-D-ribosyl)imidazole-4-carboxamido]succinate + ADP + phosphate + 2 H(+). Its pathway is purine metabolism; IMP biosynthesis via de novo pathway; 5-amino-1-(5-phospho-D-ribosyl)imidazole-4-carboxamide from 5-amino-1-(5-phospho-D-ribosyl)imidazole-4-carboxylate: step 1/2. The polypeptide is Phosphoribosylaminoimidazole-succinocarboxamide synthase (Shewanella frigidimarina (strain NCIMB 400)).